Consider the following 489-residue polypeptide: Betaine aldehyde dehydrogenase (489 aa).

Positions 26 and 93 each coordinate K(+). 150–152 (GAW) serves as a coordination point for NAD(+). Lys162 acts as the Charge relay system in catalysis. 176 to 179 (KPSE) provides a ligand contact to NAD(+). Val180 contacts K(+). 229-232 (GVET) is a binding site for NAD(+). Leu245 lines the K(+) pocket. Glu251 serves as the catalytic Proton acceptor. Residues Gly253, Cys285, and Glu386 each coordinate NAD(+). The active-site Nucleophile is Cys285. Cys285 is subject to Cysteine sulfenic acid (-SOH). Positions 456 and 459 each coordinate K(+). The active-site Charge relay system is Glu463.

It belongs to the aldehyde dehydrogenase family. In terms of assembly, dimer of dimers. K(+) serves as cofactor.

The enzyme catalyses betaine aldehyde + NAD(+) + H2O = glycine betaine + NADH + 2 H(+). Its pathway is amine and polyamine biosynthesis; betaine biosynthesis via choline pathway; betaine from betaine aldehyde: step 1/1. Functionally, involved in the biosynthesis of the osmoprotectant glycine betaine. Catalyzes the irreversible oxidation of betaine aldehyde to the corresponding acid. The polypeptide is Betaine aldehyde dehydrogenase (Burkholderia orbicola (strain MC0-3)).